The following is a 373-amino-acid chain: Transaminase AMT5-2 (373 aa).

Residue R92 participates in pyridoxal 5'-phosphate binding. K196 carries the post-translational modification N6-(pyridoxal phosphate)lysine. Residue E232 participates in pyridoxal 5'-phosphate binding.

This sequence belongs to the class-IV pyridoxal-phosphate-dependent aminotransferase family. It depends on pyridoxal 5'-phosphate as a cofactor.

Its pathway is mycotoxin biosynthesis. In terms of biological role, transaminase; part of the gene clusters that mediate the biosynthesis of AM-toxins, host-selective toxins (HSTs) causing Alternaria blotch on apple, a worldwide distributed disease. AM-toxins are cyclic depsipeptides containing the 3 residues 2-hydroxy-isovaleric acid (2-HIV), dehydroalanine, L-alanine which are common for all 3 AM-toxins I to III. The fourth precursor is L-alpha-amino-methoxyphenyl-valeric acid (L-Amv) for AM-toxin I, L-alpha-amino-phenyl-valeric acid (L-Apv) for AM-toxin II, and L-alpha-amino-hydroxyphenyl-valeric acid (L-Ahv) for AM-toxin III. AM-toxins have two target sites for affecting susceptible apple cells; they cause invagination of the plasma membrane and electrolyte loss and chloroplast disorganization. The non-ribosomal peptide synthetase AMT1 contains 4 catalytic modules and is responsible for activation of each residue in AM-toxin. The aldo-keto reductase AMT2 catalyzes the conversion of 2-keto-isovaleric acid (2-KIV) to 2-hydroxy-isovaleric acid (2-HIV), one of the precursor residues incorporated by AMT1 during AM-toxin biosynthesis, by reduction of its ketone to an alcohol. The cytochrome P450 monooxygenase AMT3 and the thioesterase AMT4 are also important for AM-toxin production, but their exact function within the AM-toxin biosynthesis are not known yet. Up to 21 proteins (including AMT1 to AMT4) are predicted to be involved in AM-toxin biosynthesis since their expression ishighly up-regulated in AM-toxin-producing cultures. The polypeptide is Transaminase AMT5-2 (Alternaria alternata (Alternaria rot fungus)).